The following is a 362-amino-acid chain: 4-hydroxy-3-methylbut-2-en-1-yl diphosphate synthase (flavodoxin) (362 aa).

Residues Cys266, Cys269, Cys301, and Glu308 each coordinate [4Fe-4S] cluster.

This sequence belongs to the IspG family. It depends on [4Fe-4S] cluster as a cofactor.

The enzyme catalyses (2E)-4-hydroxy-3-methylbut-2-enyl diphosphate + oxidized [flavodoxin] + H2O + 2 H(+) = 2-C-methyl-D-erythritol 2,4-cyclic diphosphate + reduced [flavodoxin]. It functions in the pathway isoprenoid biosynthesis; isopentenyl diphosphate biosynthesis via DXP pathway; isopentenyl diphosphate from 1-deoxy-D-xylulose 5-phosphate: step 5/6. Its function is as follows. Converts 2C-methyl-D-erythritol 2,4-cyclodiphosphate (ME-2,4cPP) into 1-hydroxy-2-methyl-2-(E)-butenyl 4-diphosphate. The protein is 4-hydroxy-3-methylbut-2-en-1-yl diphosphate synthase (flavodoxin) of Malacoplasma penetrans (strain HF-2) (Mycoplasma penetrans).